The primary structure comprises 403 residues: MAHAMENSWTISKEYHIDEEVGFALPNPQENLPDFYNDWMFIAKHLPDLIESGQLRERVEKLNMLSIDHLTDHKSQRLARLVLGCITMAYVWGKGHGDVRKVLPRNIAVPYCQLSKKLELPPILVYADCVLANWKKKDPNKPLTYENMDVLFSFRDGDCSKGFFLVSLLVEIAAASAIKVIPTVFKAMQMQERDTLLKALLEIASCLEKALQVFHQIHDHVNPKAFFSVLRIYLSGWKGNPQLSDGLVYEGFWEDPKEFAGGSAGQSSVFQCFDVLLGIQQTAGGGHAAQFLQDMRRYMPPAHRNFLCSLESNPSVREFVLSKGDAGLREAYDACVKALVSLRSYHLQIVTKYILIPASQQPKENKTSEDPSKLEAKGTGGTDLMNFLKTVRSTTEKSLLKEG.

His346 is a heme b binding site. Positions 360-381 are disordered; the sequence is QQPKENKTSEDPSKLEAKGTGG. Positions 363-376 are enriched in basic and acidic residues; that stretch reads KENKTSEDPSKLEA.

It belongs to the indoleamine 2,3-dioxygenase family. As to quaternary structure, monomer. Heme b is required as a cofactor. Expressed in mature dendritic cells located in lymphoid organs (including lymph nodes, spleen, tonsils, Peyers's patches, the gut lamina propria, and the thymic medulla), in some epithelial cells of the female genital tract, as well as in endothelial cells of term placenta and in lung parenchyma. Weakly or not expressed in most normal tissues, but mostly inducible in most tissues. Expressed in more than 50% of tumors, either by tumoral, stromal, or endothelial cells (expression in tumor is associated with a worse clinical outcome). Not overexpressed in tumor-draining lymph nodes.

It localises to the cytoplasm. The protein localises to the cytosol. It catalyses the reaction D-tryptophan + O2 = N-formyl-D-kynurenine. The catalysed reaction is L-tryptophan + O2 = N-formyl-L-kynurenine. The protein operates within amino-acid degradation; L-tryptophan degradation via kynurenine pathway; L-kynurenine from L-tryptophan: step 1/2. With respect to regulation, activity is inhibited by and MTH-trp (methylthiohydantoin-DL-tryptophan), modestly inhibited by L-1MT (1-methyl-L-tryptophan) but not D-1MT (1-methyl-D-tryptophan). In terms of biological role, catalyzes the first and rate limiting step of the catabolism of the essential amino acid tryptophan along the kynurenine pathway. Involved in the peripheral immune tolerance, contributing to maintain homeostasis by preventing autoimmunity or immunopathology that would result from uncontrolled and overreacting immune responses. Tryptophan shortage inhibits T lymphocytes division and accumulation of tryptophan catabolites induces T-cell apoptosis and differentiation of regulatory T-cells. Acts as a suppressor of anti-tumor immunity. Limits the growth of intracellular pathogens by depriving tryptophan. Protects the fetus from maternal immune rejection. The sequence is that of Indoleamine 2,3-dioxygenase 1 from Homo sapiens (Human).